The chain runs to 145 residues: Probable inactive ribonuclease-like protein 12 (145 aa).

An N-terminal signal peptide occupies residues 1–19; that stretch reads MILMVIVFLLLLFWENELT. The N-linked (GlcNAc...) asparagine glycan is linked to asparagine 88.

This sequence belongs to the pancreatic ribonuclease family.

The protein resides in the secreted. Functionally, does not exhibit any ribonuclease activity. In Rattus norvegicus (Rat), this protein is Probable inactive ribonuclease-like protein 12 (Rnase12).